Reading from the N-terminus, the 235-residue chain is Large ribosomal subunit protein uL1 (235 aa).

This sequence belongs to the universal ribosomal protein uL1 family. In terms of assembly, part of the 50S ribosomal subunit.

Binds directly to 23S rRNA. The L1 stalk is quite mobile in the ribosome, and is involved in E site tRNA release. Its function is as follows. Protein L1 is also a translational repressor protein, it controls the translation of the L11 operon by binding to its mRNA. This chain is Large ribosomal subunit protein uL1, found in Micrococcus luteus (strain ATCC 4698 / DSM 20030 / JCM 1464 / CCM 169 / CCUG 5858 / IAM 1056 / NBRC 3333 / NCIMB 9278 / NCTC 2665 / VKM Ac-2230) (Micrococcus lysodeikticus).